A 141-amino-acid chain; its full sequence is MLRTMLKSKIHRATVTQADLHYVGSVTVDQDLLDAADLLPGEQVAIVDINNGSRLETYVIPGKRGSGVIGINGAAAHLVHTGDLVILIAYGQMDDAEARAYQPRVVHVDSANQVIDLNADTSTAAAGTAGAPVPNPLADPA.

Serine 25 serves as the catalytic Schiff-base intermediate with substrate; via pyruvic acid. Pyruvic acid (Ser) is present on serine 25. Residue threonine 57 coordinates substrate. Catalysis depends on tyrosine 58, which acts as the Proton donor. 73–75 is a binding site for substrate; it reads GAA.

It belongs to the PanD family. In terms of assembly, heterooctamer of four alpha and four beta subunits. Requires pyruvate as cofactor. Is synthesized initially as an inactive proenzyme, which is activated by self-cleavage at a specific serine bond to produce a beta-subunit with a hydroxyl group at its C-terminus and an alpha-subunit with a pyruvoyl group at its N-terminus.

It is found in the cytoplasm. It catalyses the reaction L-aspartate + H(+) = beta-alanine + CO2. It functions in the pathway cofactor biosynthesis; (R)-pantothenate biosynthesis; beta-alanine from L-aspartate: step 1/1. Functionally, catalyzes the pyruvoyl-dependent decarboxylation of aspartate to produce beta-alanine. The polypeptide is Aspartate 1-decarboxylase (Salinispora arenicola (strain CNS-205)).